A 156-amino-acid polypeptide reads, in one-letter code: Small ribosomal subunit protein uS7c (156 aa).

Belongs to the universal ribosomal protein uS7 family. As to quaternary structure, part of the 30S ribosomal subunit.

The protein localises to the plastid. It localises to the chloroplast. One of the primary rRNA binding proteins, it binds directly to 16S rRNA where it nucleates assembly of the head domain of the 30S subunit. The polypeptide is Small ribosomal subunit protein uS7c (rps7) (Chara vulgaris (Common stonewort)).